A 938-amino-acid chain; its full sequence is Catenin delta-1 (938 aa).

Position 1 is an N-acetylmethionine (Met1). The segment at 1 to 357 is necessary and sufficient for interaction with CCDC85B; sequence MDDSEVESTA…ASLDSLRKGM (357 aa). The residue at position 4 (Ser4) is a Phosphoserine. The stretch at 10 to 46 forms a coiled coil; the sequence is ASILASVKEQEAQFEKLTRALEEERRHVSAQLERVRV. Residue Ser47 is modified to Phosphoserine. At Thr59 the chain carries Phosphothreonine. A Phosphotyrosine; by FYN modification is found at Tyr112. At Ser125 the chain carries Phosphoserine. 2 positions are modified to phosphotyrosine: Tyr217 and Tyr221. Ser225 is subject to Phosphoserine. Phosphotyrosine is present on Tyr228. Phosphoserine is present on residues Ser230 and Ser252. Phosphotyrosine is present on Tyr257. Ser268 and Ser269 each carry phosphoserine. A Phosphotyrosine modification is found at Tyr280. Ser288 is subject to Phosphoserine. At Tyr291 the chain carries Phosphotyrosine. Ser300 carries the post-translational modification Phosphoserine. Thr304 is modified (phosphothreonine). Phosphoserine is present on residues Ser320, Ser346, Ser349, and Ser352. ARM repeat units follow at residues 358 to 395, 398 to 437, 441 to 475, and 476 to 516; these read PPPSNWRQPELPEVIAMLGFRLDAVKSNAAAYLQHLCY, DKVKTDVRKLKGIPILVGLLDHPKKEVHLGACGALKNISF, QDNKIAIKNCDGVPALVRLLRKARDMDLTEVITGT, and LWNL…NEDC. Lys421 participates in a covalent cross-link: Glycyl lysine isopeptide (Lys-Gly) (interchain with G-Cter in SUMO2). Lys517 participates in a covalent cross-link: Glycyl lysine isopeptide (Lys-Gly) (interchain with G-Cter in SUMO2). ARM repeat units lie at residues 534-573, 583-624, 653-693, 700-739, 740-780, and 781-826; these read LRNVSSERSEARRKLRECDGLVDALIFIVQAEIGQKDSDS, LRNL…AKKG, ARGY…NLCA, RYIRSALRQEKALSAIAELLTSEHERVVKAASGALRNLAV, DARN…SILN, and TINE…ALVL. Residue Ser617 is modified to Phosphoserine. The short motif at 622–629 is the Nuclear localization signal (NLS) element; that stretch reads KKGKDEWF. Residue Ser713 is modified to Phosphoserine. 6 positions are modified to phosphoserine: Ser811, Ser847, Ser857, Ser859, Ser861, and Ser864. Residues 855-938 are disordered; that stretch reads NASRSQSSHS…LKGAPLMQKI (84 aa). Tyr865 bears the Phosphotyrosine mark. Ser868 is modified (phosphoserine). Thr869 carries the post-translational modification Phosphothreonine. The segment covering 875-888 has biased composition (basic and acidic residues); the sequence is RNQKSDKKPDREEI. Phosphoserine is present on Ser879. Lys882 is covalently cross-linked (Glycyl lysine isopeptide (Lys-Gly) (interchain with G-Cter in SUMO2)). Polar residues predominate over residues 892-908; sequence NMGSNTKSLDNNYSTLN. Ser899 is modified (phosphoserine). Tyr904 bears the Phosphotyrosine mark. Thr906 and Thr916 each carry phosphothreonine. A compositionally biased stretch (basic and acidic residues) spans 909 to 922; the sequence is ERGDHNRTLDRSGD. Position 920 is a phosphoserine (Ser920).

The protein belongs to the beta-catenin family. As to quaternary structure, belongs to a multiprotein cell-cell adhesion complex that also contains E-cadherin/CDH1, alpha-catenin/CTNNA1, beta-catenin/CTNNB1, and gamma-catenin/JUP. Binds to the C-terminal fragment of PSEN1 and mutually competes for CDH1. Interacts with ZBTB33. Interacts with GLIS2. Interacts with FER. Interacts with NANOS1 (via N-terminal region). Interacts (via N-terminus) with GNA12; the interaction regulates CDH1-mediated cell-cell adhesion. Interacts with GNA13. Component of a cadherin:catenin adhesion complex composed of at least of CDH26, beta-catenin/CTNNB1, alpha-catenin/CTNNA1 and p120 catenin/CTNND1. Interacts with CCDC85B. Interacts with PLPP3; negatively regulates the PLPP3-mediated stabilization of CTNNB1. Interacts with DSG3; the interaction facilitates DSG3 localization and retention at cell-cell junctions. Interacts with CTNND1/p120-catenin; the interaction controls CADH5 endocytosis. In terms of processing, phosphorylated by FER and other protein-tyrosine kinases. Phosphorylated at Ser-288 by PAK5. Dephosphorylated by PTPRJ. In terms of tissue distribution, expressed in basal keratinocytes (at protein level).

The protein resides in the cell junction. The protein localises to the adherens junction. Its subcellular location is the cytoplasm. It is found in the nucleus. It localises to the cell membrane. Key regulator of cell-cell adhesion that associates with and regulates the cell adhesion properties of both C-, E- and N-cadherins, being critical for their surface stability. Promotes localization and retention of DSG3 at cell-cell junctions, via its interaction with DSG3. Beside cell-cell adhesion, regulates gene transcription through several transcription factors including ZBTB33/Kaiso2 and GLIS2, and the activity of Rho family GTPases and downstream cytoskeletal dynamics. Implicated both in cell transformation by SRC and in ligand-induced receptor signaling through the EGF, PDGF, CSF-1 and ERBB2 receptors. In Mus musculus (Mouse), this protein is Catenin delta-1 (Ctnnd1).